Reading from the N-terminus, the 232-residue chain is 7-cyano-7-deazaguanine synthase (232 aa).

Cysteine 7–alanine 17 is a binding site for ATP. The Zn(2+) site is built by cysteine 185, cysteine 193, cysteine 196, and cysteine 199.

Belongs to the QueC family. Zn(2+) is required as a cofactor.

The enzyme catalyses 7-carboxy-7-deazaguanine + NH4(+) + ATP = 7-cyano-7-deazaguanine + ADP + phosphate + H2O + H(+). It participates in purine metabolism; 7-cyano-7-deazaguanine biosynthesis. In terms of biological role, catalyzes the ATP-dependent conversion of 7-carboxy-7-deazaguanine (CDG) to 7-cyano-7-deazaguanine (preQ(0)). The protein is 7-cyano-7-deazaguanine synthase of Brucella abortus (strain S19).